A 147-amino-acid polypeptide reads, in one-letter code: Hemoglobin subunit epsilon (147 aa).

Residues 3 to 147 form the Globin domain; the sequence is HFTAEEKVAI…VAIALGHKYH (145 aa). Phosphoserine occurs at positions 14 and 51. Positions 64 and 93 each coordinate heme b.

The protein belongs to the globin family. As to quaternary structure, heterotetramer of two alpha chains and two epsilon chains in early embryonic hemoglobin Gower-2; two zeta chains and two epsilon chains in early embryonic hemoglobin Gower-1. As to expression, red blood cells.

The epsilon chain is a beta-type chain of early mammalian embryonic hemoglobin. The sequence is that of Hemoglobin subunit epsilon (HBE1) from Cebus kaapori (Ka'apor capuchin).